Here is a 435-residue protein sequence, read N- to C-terminus: Ribosomal protein uS12 methylthiotransferase RimO (435 aa).

Residues 3–113 form the MTTase N-terminal domain; that stretch reads HKVGFVSLGC…VVNAVHQYLP (111 aa). [4Fe-4S] cluster-binding residues include cysteine 12, cysteine 48, cysteine 77, cysteine 144, cysteine 148, and cysteine 151. A Radical SAM core domain is found at 130–367; sequence LTPRHYAYLK…MQVQAEISRN (238 aa). One can recognise a TRAM domain in the interval 370–435; the sequence is KNKIGSTQTV…DDYDLYASLV (66 aa).

The protein belongs to the methylthiotransferase family. RimO subfamily. [4Fe-4S] cluster serves as cofactor.

The protein localises to the cytoplasm. The enzyme catalyses L-aspartate(89)-[ribosomal protein uS12]-hydrogen + (sulfur carrier)-SH + AH2 + 2 S-adenosyl-L-methionine = 3-methylsulfanyl-L-aspartate(89)-[ribosomal protein uS12]-hydrogen + (sulfur carrier)-H + 5'-deoxyadenosine + L-methionine + A + S-adenosyl-L-homocysteine + 2 H(+). Catalyzes the methylthiolation of an aspartic acid residue of ribosomal protein uS12. In Legionella pneumophila subsp. pneumophila (strain Philadelphia 1 / ATCC 33152 / DSM 7513), this protein is Ribosomal protein uS12 methylthiotransferase RimO.